Reading from the N-terminus, the 367-residue chain is Porin Omp2a (367 aa).

A signal peptide spans 1–22; the sequence is MNIKSLLLGSAAALVAASGAQA.

The protein belongs to the alphaproteobacteria porin family. Monomer.

The protein resides in the cell outer membrane. Functionally, forms passive diffusion pores that allow small molecular weight hydrophilic materials across the outer membrane. In Brucella melitensis biotype 1 (strain ATCC 23456 / CCUG 17765 / NCTC 10094 / 16M), this protein is Porin Omp2a (omp2a).